Here is a 217-residue protein sequence, read N- to C-terminus: Probable GTP-binding protein EngB (217 aa).

Positions 37–214 (DGVEIAFAGR…RAAMAKLLEE (178 aa)) constitute an EngB-type G domain. Residues 45 to 52 (GRSNVGKS), 72 to 76 (GRTQE), 92 to 95 (DMPG), 159 to 162 (TKAD), and 193 to 195 (TSS) contribute to the GTP site. Residues Ser-52 and Thr-74 each coordinate Mg(2+).

This sequence belongs to the TRAFAC class TrmE-Era-EngA-EngB-Septin-like GTPase superfamily. EngB GTPase family. Requires Mg(2+) as cofactor.

Necessary for normal cell division and for the maintenance of normal septation. This Bradyrhizobium diazoefficiens (strain JCM 10833 / BCRC 13528 / IAM 13628 / NBRC 14792 / USDA 110) protein is Probable GTP-binding protein EngB.